Reading from the N-terminus, the 601-residue chain is Glutamine--tRNA ligase (601 aa).

Residues 76–86 (PEPNGYLHIGH) carry the 'HIGH' region motif. ATP is bound by residues 77 to 79 (EPN) and 83 to 89 (HIGHAKS). Residues Asp109 and Tyr253 each coordinate L-glutamine. ATP-binding positions include Thr272, 301 to 302 (RL), and 309 to 311 (MSK). Residues 308-312 (VMSKR) carry the 'KMSKS' region motif.

Belongs to the class-I aminoacyl-tRNA synthetase family. In terms of assembly, monomer.

It localises to the cytoplasm. The catalysed reaction is tRNA(Gln) + L-glutamine + ATP = L-glutaminyl-tRNA(Gln) + AMP + diphosphate. The protein is Glutamine--tRNA ligase of Rhodopirellula baltica (strain DSM 10527 / NCIMB 13988 / SH1).